Reading from the N-terminus, the 65-residue chain is MIVPVRCFTCGKVIGDKYYEFKRRVEAGEDPEKVLDDLGLERYCCRRMLLSHVELIDDIMHYRVY.

4 residues coordinate Zn(2+): cysteine 7, cysteine 10, cysteine 44, and cysteine 45.

This sequence belongs to the archaeal Rpo10/eukaryotic RPB10 RNA polymerase subunit family. Part of the RNA polymerase complex. Zn(2+) is required as a cofactor.

It localises to the cytoplasm. The catalysed reaction is RNA(n) + a ribonucleoside 5'-triphosphate = RNA(n+1) + diphosphate. In terms of biological role, DNA-dependent RNA polymerase (RNAP) catalyzes the transcription of DNA into RNA using the four ribonucleoside triphosphates as substrates. This Pyrococcus furiosus (strain ATCC 43587 / DSM 3638 / JCM 8422 / Vc1) protein is DNA-directed RNA polymerase subunit Rpo10.